We begin with the raw amino-acid sequence, 126 residues long: Glycine cleavage system H protein (126 aa).

The region spanning 22–104 is the Lipoyl-binding domain; the sequence is VATVGITEYA…YEKAWMVKIE (83 aa). Lys-63 is modified (N6-lipoyllysine).

It belongs to the GcvH family. The glycine cleavage system is composed of four proteins: P, T, L and H. The cofactor is (R)-lipoate.

Its function is as follows. The glycine cleavage system catalyzes the degradation of glycine. The H protein shuttles the methylamine group of glycine from the P protein to the T protein. In terms of biological role, is also involved in protein lipoylation via its role as an octanoyl/lipoyl carrier protein intermediate. The protein is Glycine cleavage system H protein of Staphylococcus epidermidis (strain ATCC 12228 / FDA PCI 1200).